The following is a 689-amino-acid chain: Probable serine/threonine-protein kinase abkC (689 aa).

Residues 42-79 (NNSGNENYKNFNYNYKNKNNYNNNNNNNNSNSSSNNNG) are disordered. Residues 257–689 (WFDEEPMASG…NNKNNNEKNK (433 aa)) enclose the Protein kinase domain. Residues 263-271 (MASGSVAQV) and lysine 285 contribute to the ATP site. The active-site Proton acceptor is the aspartate 417. Positions 652-689 (KQLNNDNNNNNNNNNNNKNNNDNNNKNNNNKNNNEKNK) are disordered. A compositionally biased stretch (low complexity) spans 655 to 683 (NNDNNNNNNNNNNNKNNNDNNNKNNNNKN).

Belongs to the protein kinase superfamily. ADCK protein kinase family.

This Dictyostelium discoideum (Social amoeba) protein is Probable serine/threonine-protein kinase abkC (abkC).